The primary structure comprises 1940 residues: Myosin-3 (1940 aa).

The Myosin N-terminal SH3-like domain occupies 33–82; it reads DAKTYCFVVDSKEEYAKGKIKSSQDGKVTVETEDNRTLVVKPEDVYAMNP. In terms of domain architecture, Myosin motor spans 86-779; sequence DKIEDMAMLT…LLGTLEEMRD (694 aa). N6,N6,N6-trimethyllysine is present on Lys-130. ATP is bound at residue 179 to 186; it reads GESGAGKT. Actin-binding regions lie at residues 656-678 and 758-772; these read LNKLMSNLRTTHPHFVRCIIPNE and KFGHTKVFFKAGLLG. One can recognise an IQ domain in the interval 782–811; that stretch reads LAKLITRTQAVCRGFLMRVEFQKMMQRRES. Positions 840–1933 form a coiled coil; sequence LLKSAETEKE…KTRDFTSSRM (1094 aa). Residues 1260–1289 form a disordered region; that stretch reads ARGKNEETQRSLSELTTQKSRLQTEAGELS. The segment covering 1269–1282 has biased composition (polar residues); the sequence is RSLSELTTQKSRLQ.

Belongs to the TRAFAC class myosin-kinesin ATPase superfamily. Myosin family. As to quaternary structure, muscle myosin is a hexameric protein that consists of 2 heavy chain subunits (MHC), 2 alkali light chain subunits (MLC) and 2 regulatory light chain subunits (MLC-2).

The protein resides in the cytoplasm. Its subcellular location is the myofibril. In terms of biological role, muscle contraction. This is Myosin-3 (Myh3) from Rattus norvegicus (Rat).